The chain runs to 529 residues: MTDLVPLRRALLSVSDKTGLVPLGQALAARGVELLSTGGTAKALREAGLDVVDVSDVTGFPEMMDGRVKTLHPKVHGGLLALRDNAAHVSAMERHGIGAIDLLVVNLYPFEATVAAGADYAACIENIDIGGPAMIRAAAKNHSFVTVLTDVEDYEALLGELEAREGATGYPFRQKMALNAYARTAAYDAAVSGWMTDALAEVAPRRRAVAGTLAQTLRYGENPHQGAAFYVDGSDRPGVATAVQHQGKELSYNNINDTDAAFELVAEFAPEDGPACAIIKHANPCGVARGATLAEAYTKAFQCDQTSAFGGIIALNRPLDGPTAEAISGIFTEVVIAPGADETARAVFAAKKNLRLLTTEGLPDPKAPALTVRQVSGGYLVQDKDNGNIGWDDLKVVTKRAPSEAEIADLLFAWKVAKHVKSNAIVYVKDGATVGVGAGQMSRVDSARIAARKSADMAEALGLETPLIQGSVVASDAFFPFPDGLLTAAEAGATAVIQPGGSMRDVEVIAAADAAGLAMVFTGMRHFRH.

Residues 2-149 (TDLVPLRRAL…KNHSFVTVLT (148 aa)) enclose the MGS-like domain.

It belongs to the PurH family.

The enzyme catalyses (6R)-10-formyltetrahydrofolate + 5-amino-1-(5-phospho-beta-D-ribosyl)imidazole-4-carboxamide = 5-formamido-1-(5-phospho-D-ribosyl)imidazole-4-carboxamide + (6S)-5,6,7,8-tetrahydrofolate. The catalysed reaction is IMP + H2O = 5-formamido-1-(5-phospho-D-ribosyl)imidazole-4-carboxamide. The protein operates within purine metabolism; IMP biosynthesis via de novo pathway; 5-formamido-1-(5-phospho-D-ribosyl)imidazole-4-carboxamide from 5-amino-1-(5-phospho-D-ribosyl)imidazole-4-carboxamide (10-formyl THF route): step 1/1. It participates in purine metabolism; IMP biosynthesis via de novo pathway; IMP from 5-formamido-1-(5-phospho-D-ribosyl)imidazole-4-carboxamide: step 1/1. The sequence is that of Bifunctional purine biosynthesis protein PurH from Dinoroseobacter shibae (strain DSM 16493 / NCIMB 14021 / DFL 12).